The primary structure comprises 298 residues: ATP phosphoribosyltransferase (298 aa).

Belongs to the ATP phosphoribosyltransferase family. Long subfamily. Mg(2+) serves as cofactor.

The protein localises to the cytoplasm. It catalyses the reaction 1-(5-phospho-beta-D-ribosyl)-ATP + diphosphate = 5-phospho-alpha-D-ribose 1-diphosphate + ATP. It functions in the pathway amino-acid biosynthesis; L-histidine biosynthesis; L-histidine from 5-phospho-alpha-D-ribose 1-diphosphate: step 1/9. With respect to regulation, feedback inhibited by histidine. In terms of biological role, catalyzes the condensation of ATP and 5-phosphoribose 1-diphosphate to form N'-(5'-phosphoribosyl)-ATP (PR-ATP). Has a crucial role in the pathway because the rate of histidine biosynthesis seems to be controlled primarily by regulation of HisG enzymatic activity. This chain is ATP phosphoribosyltransferase (hisG), found in Photobacterium profundum (strain SS9).